The primary structure comprises 335 residues: MAETATRSDSGMFWKATTYKEQYWDGYLAARPKYSSDFYERIVDYYKAHNPSPPTPTVAHDVGTGPGQVASELCKYFDKVIASDPNSTHLAVASARNEKSGLNHKITWTEVSAEDLNSHYPAGSASFLAAAECLPLLDVPRALNTFAHLLHPNGTLAAWFYGRPVFSEPTVAAKCQPILNDIIDLTFEKVIKGAPPAHKTTWKRSTDTLYSFLDNVTFPAETWRDVYRFKWNPHLPLSVVGPNACDYPIEPSSCIDPEREKVVEAKDPHFWEEVWDISEVRRFVECLLPNIEDLKSKGVYDHVEVKYKELEEAMGGDNAKKEITWPVVLILATRV.

It belongs to the methyltransferase superfamily.

The protein operates within pigment biosynthesis. It participates in secondary metabolite biosynthesis. Methyltransferase; part of the gene cluster that mediates the biosynthesis of pleosporalin A, ascomycone A, as well as a third cryptic naphthoquinone derived pigment, all responsible for the coloration of conidia. Essential for the production of pleosporalin A, but not the 2 other final products. The pathway begins with the biosynthesis of the cyclized heptaketide 3-acetonyl-1,6,8-trihydroxy-2-naphthaldehyde by the NR-PKS pgmA. The C-6 hydroxyl group is further methylated by the O-methyltransferase pgmB to yield fusarubinaldehyde which is in turn oxidized by the cytochrome P450 monooxygenase pgmC at C-9. The C-1 hydroxyl group is then methylated spontaneously. Although pgmE, pgmD and pgmH are essential for the production of pleosporalin A, it is not the case for the 2 other final products and it remains difficult to assign a specific function to each enzyme. PgmF and pgmG seem not to be involved in pigment biosynthesis although they were regulated by the cluster-specific transcription factor pgmR. The protein is Methyltransferase pgmE of Aspergillus terreus.